A 109-amino-acid chain; its full sequence is Nucleoid-associated protein HS_1309 (109 aa).

Belongs to the YbaB/EbfC family. As to quaternary structure, homodimer.

The protein localises to the cytoplasm. Its subcellular location is the nucleoid. Binds to DNA and alters its conformation. May be involved in regulation of gene expression, nucleoid organization and DNA protection. The chain is Nucleoid-associated protein HS_1309 from Histophilus somni (strain 129Pt) (Haemophilus somnus).